Here is a 285-residue protein sequence, read N- to C-terminus: Urease accessory protein UreD 1 (285 aa).

Belongs to the UreD family. In terms of assembly, ureD, UreF and UreG form a complex that acts as a GTP-hydrolysis-dependent molecular chaperone, activating the urease apoprotein by helping to assemble the nickel containing metallocenter of UreC. The UreE protein probably delivers the nickel.

It localises to the cytoplasm. Functionally, required for maturation of urease via the functional incorporation of the urease nickel metallocenter. The sequence is that of Urease accessory protein UreD 1 from Pseudomonas syringae pv. syringae (strain B728a).